A 95-amino-acid chain; its full sequence is Aspartyl/glutamyl-tRNA(Asn/Gln) amidotransferase subunit C (95 aa).

Belongs to the GatC family. Heterotrimer of A, B and C subunits.

The catalysed reaction is L-glutamyl-tRNA(Gln) + L-glutamine + ATP + H2O = L-glutaminyl-tRNA(Gln) + L-glutamate + ADP + phosphate + H(+). It carries out the reaction L-aspartyl-tRNA(Asn) + L-glutamine + ATP + H2O = L-asparaginyl-tRNA(Asn) + L-glutamate + ADP + phosphate + 2 H(+). Its function is as follows. Allows the formation of correctly charged Asn-tRNA(Asn) or Gln-tRNA(Gln) through the transamidation of misacylated Asp-tRNA(Asn) or Glu-tRNA(Gln) in organisms which lack either or both of asparaginyl-tRNA or glutaminyl-tRNA synthetases. The reaction takes place in the presence of glutamine and ATP through an activated phospho-Asp-tRNA(Asn) or phospho-Glu-tRNA(Gln). This Prochlorococcus marinus (strain NATL2A) protein is Aspartyl/glutamyl-tRNA(Asn/Gln) amidotransferase subunit C.